A 434-amino-acid chain; its full sequence is MQVSVETTQGLGRRLSITVPADTIKQAIKKELINAAKSVRIDGFRKGHVPMNIVEQRYGASVRQDVLGDAMQRSFVDAIIKEKINPAGAPNYVPGEYKEGEDFTFAVEFEVYPEVELKGLDGIEVEKPVVEVNDADVDTMLDTLRKQQATWKETDRAAQAEDRVTVDFSGSIDGEEFEGGKASDFVLAMGQGRMIPGFEEGLVGHKAGEEFTIDVNFPEDYHAENLKGKAAKFAIVLKKVEERELPELTEEFIKRFGVADGSTEGLRAEVRKNMERELKGAVRNRIKTQAIDGLVSANEIDVPAALIDGEVDVLRRQAAQRFGGNEKQALELPRELFEEQAKRRVVVGLLLGEVISTNDLKADEDRVKTLIEEMASAYEDPSEVVEFYSKNKELMNNMRNVALEEQAVEALLAKAKVTEKATTFSELMNQTQQA.

Residues 161-246 (EDRVTVDFSG…LKKVEERELP (86 aa)) enclose the PPIase FKBP-type domain.

Belongs to the FKBP-type PPIase family. Tig subfamily.

It localises to the cytoplasm. It catalyses the reaction [protein]-peptidylproline (omega=180) = [protein]-peptidylproline (omega=0). Its function is as follows. Involved in protein export. Acts as a chaperone by maintaining the newly synthesized protein in an open conformation. Functions as a peptidyl-prolyl cis-trans isomerase. The chain is Trigger factor from Serratia proteamaculans (strain 568).